A 369-amino-acid chain; its full sequence is Methylthioribose-1-phosphate isomerase (369 aa).

N-acetylmethionine is present on methionine 1. Arginine 158 is modified (omega-N-methylarginine). Catalysis depends on aspartate 248, which acts as the Proton donor. The residue at position 366 (serine 366) is a Phosphoserine.

The protein belongs to the eIF-2B alpha/beta/delta subunits family. MtnA subfamily.

It is found in the cytoplasm. Its subcellular location is the nucleus. The catalysed reaction is 5-(methylsulfanyl)-alpha-D-ribose 1-phosphate = 5-(methylsulfanyl)-D-ribulose 1-phosphate. It participates in amino-acid biosynthesis; L-methionine biosynthesis via salvage pathway; L-methionine from S-methyl-5-thio-alpha-D-ribose 1-phosphate: step 1/6. In terms of biological role, catalyzes the interconversion of methylthioribose-1-phosphate (MTR-1-P) into methylthioribulose-1-phosphate (MTRu-1-P). This Mus musculus (Mouse) protein is Methylthioribose-1-phosphate isomerase (Mri1).